We begin with the raw amino-acid sequence, 426 residues long: Putative glutamate--cysteine ligase 2 (426 aa).

This sequence belongs to the glutamate--cysteine ligase type 2 family. YbdK subfamily.

It carries out the reaction L-cysteine + L-glutamate + ATP = gamma-L-glutamyl-L-cysteine + ADP + phosphate + H(+). Functionally, ATP-dependent carboxylate-amine ligase which exhibits weak glutamate--cysteine ligase activity. This is Putative glutamate--cysteine ligase 2 from Bradyrhizobium diazoefficiens (strain JCM 10833 / BCRC 13528 / IAM 13628 / NBRC 14792 / USDA 110).